The primary structure comprises 485 residues: Aspartyl/glutamyl-tRNA(Asn/Gln) amidotransferase subunit B (485 aa).

The protein belongs to the GatB/GatE family. GatB subfamily. In terms of assembly, heterotrimer of A, B and C subunits.

The catalysed reaction is L-glutamyl-tRNA(Gln) + L-glutamine + ATP + H2O = L-glutaminyl-tRNA(Gln) + L-glutamate + ADP + phosphate + H(+). The enzyme catalyses L-aspartyl-tRNA(Asn) + L-glutamine + ATP + H2O = L-asparaginyl-tRNA(Asn) + L-glutamate + ADP + phosphate + 2 H(+). Allows the formation of correctly charged Asn-tRNA(Asn) or Gln-tRNA(Gln) through the transamidation of misacylated Asp-tRNA(Asn) or Glu-tRNA(Gln) in organisms which lack either or both of asparaginyl-tRNA or glutaminyl-tRNA synthetases. The reaction takes place in the presence of glutamine and ATP through an activated phospho-Asp-tRNA(Asn) or phospho-Glu-tRNA(Gln). The sequence is that of Aspartyl/glutamyl-tRNA(Asn/Gln) amidotransferase subunit B from Borrelia hermsii (strain HS1 / DAH).